The sequence spans 212 residues: Large ribosomal subunit protein uL3 (212 aa).

Positions 133–156 (SMTHGSKNHRLPGSTGAGTTPGRV) are disordered.

It belongs to the universal ribosomal protein uL3 family. In terms of assembly, part of the 50S ribosomal subunit. Forms a cluster with proteins L14 and L19.

Its function is as follows. One of the primary rRNA binding proteins, it binds directly near the 3'-end of the 23S rRNA, where it nucleates assembly of the 50S subunit. The polypeptide is Large ribosomal subunit protein uL3 (Crocosphaera subtropica (strain ATCC 51142 / BH68) (Cyanothece sp. (strain ATCC 51142))).